The sequence spans 66 residues: MMKVQELRTKTEDELRKELLELSRERFKLRMQMGTGQLVRNSELKRVRRSIARVKTVLTEKQQQAQ.

It belongs to the universal ribosomal protein uL29 family.

This Nitrosococcus oceani (strain ATCC 19707 / BCRC 17464 / JCM 30415 / NCIMB 11848 / C-107) protein is Large ribosomal subunit protein uL29.